Here is a 252-residue protein sequence, read N- to C-terminus: Hydroxyacylglutathione hydrolase (252 aa).

Residues histidine 54, histidine 56, aspartate 58, histidine 59, histidine 111, aspartate 130, and histidine 170 each coordinate Zn(2+).

The protein belongs to the metallo-beta-lactamase superfamily. Glyoxalase II family. Monomer. Zn(2+) serves as cofactor.

It carries out the reaction an S-(2-hydroxyacyl)glutathione + H2O = a 2-hydroxy carboxylate + glutathione + H(+). Its pathway is secondary metabolite metabolism; methylglyoxal degradation; (R)-lactate from methylglyoxal: step 2/2. Functionally, thiolesterase that catalyzes the hydrolysis of S-D-lactoyl-glutathione to form glutathione and D-lactic acid. This Francisella tularensis subsp. holarctica (strain FTNF002-00 / FTA) protein is Hydroxyacylglutathione hydrolase.